A 437-amino-acid polypeptide reads, in one-letter code: Vacuolar protein sorting-associated protein 4A (437 aa).

In terms of domain architecture, MIT spans 2-80; it reads TTSTLQKAID…KDYLRNKEKH (79 aa). K8 bears the N6-acetyllysine mark. Residues 15-37 are a coiled coil; sequence KATEEDKAKNYEEALRLYQHAVE. The disordered stretch occupies residues 75–106; the sequence is RNKEKHGKKPVKENQSEGKGSDSDSEGDNPEK. The segment covering 84-96 has biased composition (basic and acidic residues); sequence PVKENQSEGKGSD. Phosphoserine is present on residues S95 and S97. 167 to 174 is a binding site for ATP; the sequence is GPPGTGKS.

The protein belongs to the AAA ATPase family. Proposed to be monomeric or homodimeric in nucleotide-free form and to oligomerize upon binding to ATP to form two stacked hexameric or heptameric rings with a central pore through which ESCRT-III substrates are translocated in an ATP-dependent manner. Interacts with CHMP1A, CHMP1B, CHMP2A, CHMP2B, CHMP3, CHMP4A, CHMP4B, CHMP4C and CHMP6. Interacts with VPS4B; the interaction suggests a heteromeric assembly with VPS4B. Interacts with SPAST. Interacts with IST1. Interacts with ZFYVE19/ANCHR; leading to retain it at midbody. In terms of tissue distribution, highly expressed in testis and moderately in heart and brain. Not detected in spleen, lung, liver, skeletal muscle or kidney.

It localises to the late endosome membrane. It is found in the midbody. The protein localises to the cytoplasm. Its subcellular location is the cytoskeleton. The protein resides in the spindle. The catalysed reaction is ATP + H2O = ADP + phosphate + H(+). In terms of biological role, involved in late steps of the endosomal multivesicular bodies (MVB) pathway. Recognizes membrane-associated ESCRT-III assemblies and catalyzes their disassembly, possibly in combination with membrane fission. Redistributes the ESCRT-III components to the cytoplasm for further rounds of MVB sorting. MVBs contain intraluminal vesicles (ILVs) that are generated by invagination and scission from the limiting membrane of the endosome and mostly are delivered to lysosomes enabling degradation of membrane proteins, such as stimulated growth factor receptors, lysosomal enzymes and lipids. It is required for proper accomplishment of various processes including the regulation of endosome size, primary cilium organization, mitotic spindle organization and chromosome segregation, and nuclear envelope sealing and spindle disassembly during anaphase. In conjunction with the ESCRT machinery also appears to function in topologically equivalent membrane fission events, such as the terminal stages of cytokinesis. Involved in cytokinesis: retained at the midbody by ZFYVE19/ANCHR and CHMP4C until abscission checkpoint signaling is terminated at late cytokinesis. It is then released following dephosphorylation of CHMP4C, leading to abscission. VPS4A/B are required for the exosomal release of SDCBP, CD63 and syndecan. Critical for normal erythroblast cytokinesis and correct erythropoiesis. This chain is Vacuolar protein sorting-associated protein 4A, found in Mus musculus (Mouse).